A 355-amino-acid chain; its full sequence is S-adenosylmethionine:tRNA ribosyltransferase-isomerase (355 aa).

It belongs to the QueA family. Monomer.

The protein localises to the cytoplasm. The enzyme catalyses 7-aminomethyl-7-carbaguanosine(34) in tRNA + S-adenosyl-L-methionine = epoxyqueuosine(34) in tRNA + adenine + L-methionine + 2 H(+). It participates in tRNA modification; tRNA-queuosine biosynthesis. In terms of biological role, transfers and isomerizes the ribose moiety from AdoMet to the 7-aminomethyl group of 7-deazaguanine (preQ1-tRNA) to give epoxyqueuosine (oQ-tRNA). The sequence is that of S-adenosylmethionine:tRNA ribosyltransferase-isomerase from Burkholderia ambifaria (strain ATCC BAA-244 / DSM 16087 / CCUG 44356 / LMG 19182 / AMMD) (Burkholderia cepacia (strain AMMD)).